Here is a 446-residue protein sequence, read N- to C-terminus: MATQSSPVITDMKVIPVAGHDSMLLNIGGAHNAYFTRNIVVLTDNAGHTGIGEAPGGDVIYQTLVDAIPMVLGQEVARLNKVVQQVHKGNQAADFDTFGKGAWTFELRVNAVAALEAALLDLLGKALNVPVCELLGPGKQREAITVLGYLFYIGDRTKTDLPYVENTPGNHEWYQLRHQKAMNSEAVVRLAEASQDRYGFKDFKLKGGVLPGEQEIDTVRALKKRFPDARITVDPNGAWLLDEAISLCKGLNDVLTYAEDPCGAEQGFSGREVMAEFRRATGLPVATNMIATNWREMGHAVMLNAVDIPLADPHFWTLSGAVRVAQLCDDWGLTWGCHSNNHFDISLAMFTHVGAAAPGNPTAIDTHWIWQEGDCRLTQNPLEIKNGKIAVPDAPGLGVELDWEQVQKAHEAYKRLPGGARNDAGPMQYLIPGWTFDRKRPVFGRH.

Substrate contacts are provided by His-31, Thr-104, Tyr-149, and Lys-204. Lys-206 (proton acceptor) is an active-site residue. Mg(2+) is bound by residues Asp-234, Glu-265, and Asn-288. 234-236 contributes to the substrate binding site; sequence DPN. Residues Asn-288, 338–340, His-367, and Arg-421 contribute to the substrate site; that span reads HSN. The active-site Proton acceptor is His-338.

It belongs to the mandelate racemase/muconate lactonizing enzyme family. GlucD subfamily. A divalent metal cation serves as cofactor.

Functionally, does not seem to have an in-vivo activity on glucarate or idarate. Its real substrate is unknown. In Escherichia coli (strain K12), this protein is Glucarate dehydratase-related protein (gudX).